The primary structure comprises 179 residues: Cytoglobin-2 (179 aa).

A Globin domain is found at 18–167; sequence PLSDAEMEII…VYWHVTGAYT (150 aa). Residues His81 and His113 each contribute to the heme b site.

This sequence belongs to the globin family. As to quaternary structure, monomeric.

Its subcellular location is the cytoplasm. It localises to the nucleus. The catalysed reaction is Fe(II)-heme b-[protein] + nitric oxide + O2 = Fe(III)-heme b-[protein] + nitrate. The enzyme catalyses Fe(III)-heme b-[protein] + nitric oxide + H2O = Fe(II)-heme b-[protein] + nitrite + 2 H(+). It catalyses the reaction 2 superoxide + 2 H(+) = H2O2 + O2. It carries out the reaction H2O2 + AH2 = A + 2 H2O. Functionally, probable multifunctional globin with a hexacoordinated heme iron required for the catalysis of various reactions depending on redox condition of the cell as well as oxygen availability. Has a nitric oxide dioxygenase (NOD) activity and is most probably involved in cell-mediated and oxygen-dependent nitric oxide consumption. Under normoxic conditions functions as a nitric oxide dioxygenase (NOD) but under hypoxic conditions the globin may switch its function to that of a nitrite (NO2) reductase (NiR), generating nitric oxide. Could also have peroxidase and superoxide dismutase activities, detoxifying reactive oxygen species and protecting cells against oxidative stress. Also binds dioxygen with low affinity and could function as an oxygen sensor but has probably no function as a respiratory oxygen carrier. The protein is Cytoglobin-2 of Oryzias latipes (Japanese rice fish).